The primary structure comprises 62 residues: Amolopin-p-MT1 (62 aa).

Residues 1 to 22 (MFTLKKSLLLLFFLGTISLSLC) form the signal peptide. A propeptide spans 23-42 (EQERGADEEENGGEVTEEEV) (removed in mature form).

This sequence belongs to the frog skin active peptide (FSAP) family. Brevinin subfamily. Expressed by the skin glands.

The protein resides in the secreted. Antimicrobial peptide. Active against a variety of Gram-negative and Gram-positive bacterial strains. Not active against fungi. Shows weak hemolytic activity against human erythrocytes. This chain is Amolopin-p-MT1, found in Amolops mantzorum (Sichuan torrent frog).